The sequence spans 222 residues: UPF0173 metal-dependent hydrolase Nther_2337 (222 aa).

The protein belongs to the UPF0173 family.

In Natranaerobius thermophilus (strain ATCC BAA-1301 / DSM 18059 / JW/NM-WN-LF), this protein is UPF0173 metal-dependent hydrolase Nther_2337.